The chain runs to 1564 residues: Superkiller complex protein 3 (1564 aa).

At serine 2 the chain carries N-acetylserine. TPR repeat units lie at residues 6–39, 40–73, 272–305, 307–339, 386–419, 420–453, 455–492, 493–527, 564–597, 598–631, 633–665, 679–713, 790–824, 826–860, 861–894, 980–1013, 1020–1054, 1056–1084, 1326–1359, and 1400–1433; these read VKTALKSARDAIRNKEYKEALKHCKTVLKQEKNN, YNAWVFIGVAAAELEQPDQAQSAYKKAAELEPDQ, GPGLIGLGIKALQDKKYEDAVRNLTEGLKESPVC, SGWYHLAEAQVKMHRPKEAVLSCSQALKIVDNL, PGLLVLKSLAYRNKGSFDEAAKIMEDLLSSYPDL, AEVHALEALIHFTKKDYLQAEKCFQRALEKDTEV, EYHYQLGLTYWFMGEETRKDKTKALTHFLKAARLDTYM, GKVFCYLGHYYRDVVGDKNRARGCYRKAFELDDTD, KWAWLRRGLYYLKAGQHSQAVADLQAALRADPKD, FNCWESLGEAYLSRGGYTTALKSFTKASELNPES, YSVFKVAAIQQILGKYKEAVAQYQMIIKKKEDY, MAKAALVDYLDGKAVDYIEKALEYFTCALQHRADV, AQHLAETGSNMNDLKELLEKSLHCLKKAVRLDSNN, LYWNALGVVACYSGIGNYALAQHCFIKSIQSEQIN, AVAWTNLGVLYLTNENIEQAHEAFKMAQSLDPSY, APAFTMLGYLNEHLQLKKEAANAYQRAILLLQTA, NVAIRNYGRLLCSTGEYDKAIQAFKSTPLEVLEDI, GFALALFMKGLYKESSKAYERALSIVESE, KWSLSQAVTGLIDTGRISEAETLCTKNLKSNPDQ, and VPAWQWLAHVYQSQGMMRAAEMCYRKSLQLASQR.

This sequence belongs to the SKI3 family. As to quaternary structure, component of the SKI complex which consists of SKIC2, SKIC3 and SKIC8. Interacts with PAF1. In terms of tissue distribution, widely expressed with the highest levels observed in vascular tissues, lymph node, pituitary, lung and intestine. Not expressed in the liver.

The protein localises to the cytoplasm. Its subcellular location is the nucleus. Functionally, component of the SKI complex, a multiprotein complex that assists the RNA-degrading exosome during the mRNA decay and quality-control pathways. The SKI complex catalyzes mRNA extraction from 80S ribosomal complexes in the 3'-5' direction and channels mRNA to the cytosolic exosome for degradation. SKI-mediated extraction of mRNA from stalled ribosomes allow binding of the Pelota-HBS1L complex and subsequent ribosome disassembly by ABCE1 for ribosome recycling. In the nucleus, the SKI complex associates with transcriptionally active genes in a manner dependent on PAF1 complex (PAF1C). This chain is Superkiller complex protein 3, found in Homo sapiens (Human).